Consider the following 306-residue polypeptide: MWFKNLLVYRLTQDVPFDAEALETALATKPARACASQEVATYGFVAPFGKGEDAPLVHISQDFMLIAARKEERILPGSVVRDALKEKVDEIEAEQMRKVYKKERDQLKDEIIQAFLPRAFIRRSATFAAIAPKQGLILVNASSPKRAEDLLSTLREVIGSLPVRPLTVKVSPSATMTDWVKTQKAADNFFVLDECELRDTHEDGGIVRCKRQDLTGDEIQLHLSTGKVVTQLSLAWQDKLSFVLDDKLVVKRLKFEDLLQDQAEQDGGDEALGQLDASFTLMMLTFGEFLPELFEALGGEEIPQGI.

This sequence belongs to the RdgC family.

It localises to the cytoplasm. The protein localises to the nucleoid. Functionally, may be involved in recombination. This chain is Recombination-associated protein RdgC, found in Pseudomonas syringae pv. syringae (strain B728a).